Here is a 383-residue protein sequence, read N- to C-terminus: Acetylornithine deacetylase (383 aa).

His80 is a binding site for Zn(2+). Residue Asp82 is part of the active site. Zn(2+) is bound at residue Asp112. Residue Glu144 is part of the active site. Residues Glu145, Glu169, and His355 each contribute to the Zn(2+) site.

It belongs to the peptidase M20A family. ArgE subfamily. In terms of assembly, homodimer. Requires Zn(2+) as cofactor. Co(2+) serves as cofactor. The cofactor is glutathione.

The protein localises to the cytoplasm. The enzyme catalyses N(2)-acetyl-L-ornithine + H2O = L-ornithine + acetate. It functions in the pathway amino-acid biosynthesis; L-arginine biosynthesis; L-ornithine from N(2)-acetyl-L-ornithine (linear): step 1/1. In terms of biological role, catalyzes the hydrolysis of the amide bond of N(2)-acetylated L-amino acids. Cleaves the acetyl group from N-acetyl-L-ornithine to form L-ornithine, an intermediate in L-arginine biosynthesis pathway, and a branchpoint in the synthesis of polyamines. This Escherichia coli O45:K1 (strain S88 / ExPEC) protein is Acetylornithine deacetylase.